The following is a 233-amino-acid chain: Purine nucleoside phosphorylase DeoD-type (233 aa).

A purine D-ribonucleoside is bound at residue His4. Residues Gly20, Arg24, Arg43, and 87–90 (RVGS) each bind phosphate. Residues 178 to 180 (EME) and 202 to 203 (SD) contribute to the a purine D-ribonucleoside site. Catalysis depends on Asp203, which acts as the Proton donor.

It belongs to the PNP/UDP phosphorylase family. Homohexamer; trimer of homodimers.

The enzyme catalyses a purine D-ribonucleoside + phosphate = a purine nucleobase + alpha-D-ribose 1-phosphate. It catalyses the reaction a purine 2'-deoxy-D-ribonucleoside + phosphate = a purine nucleobase + 2-deoxy-alpha-D-ribose 1-phosphate. Its function is as follows. Catalyzes the reversible phosphorolytic breakdown of the N-glycosidic bond in the beta-(deoxy)ribonucleoside molecules, with the formation of the corresponding free purine bases and pentose-1-phosphate. The sequence is that of Purine nucleoside phosphorylase DeoD-type from Bacillus subtilis (strain 168).